A 170-amino-acid polypeptide reads, in one-letter code: Ribosome maturation factor RimM (170 aa).

A PRC barrel domain is found at 98-170; it reads PDEYYWVDLE…RIVVDWDPEF (73 aa).

The protein belongs to the RimM family. As to quaternary structure, binds ribosomal protein uS19.

The protein resides in the cytoplasm. Functionally, an accessory protein needed during the final step in the assembly of 30S ribosomal subunit, possibly for assembly of the head region. Essential for efficient processing of 16S rRNA. May be needed both before and after RbfA during the maturation of 16S rRNA. It has affinity for free ribosomal 30S subunits but not for 70S ribosomes. In Xylella fastidiosa (strain 9a5c), this protein is Ribosome maturation factor RimM.